We begin with the raw amino-acid sequence, 82 residues long: Putative membrane protein insertion efficiency factor (82 aa).

This sequence belongs to the UPF0161 family.

The protein localises to the cell membrane. Could be involved in insertion of integral membrane proteins into the membrane. The sequence is that of Putative membrane protein insertion efficiency factor from Streptococcus uberis (strain ATCC BAA-854 / 0140J).